Consider the following 226-residue polypeptide: UPF0173 metal-dependent hydrolase GFO_2312 (226 aa).

The protein belongs to the UPF0173 family.

The sequence is that of UPF0173 metal-dependent hydrolase GFO_2312 from Christiangramia forsetii (strain DSM 17595 / CGMCC 1.15422 / KT0803) (Gramella forsetii).